A 606-amino-acid chain; its full sequence is Putative mitochondrial ATP-dependent helicase irc3 (606 aa).

A Helicase ATP-binding domain is found at N40–H201. ATP is bound at residue L53–T60. The short motif at D148–H151 is the DEAH box element. Residues Q246–Y398 form the Helicase C-terminal domain.

Belongs to the helicase family. IRC3 subfamily.

Its subcellular location is the mitochondrion. The protein is Putative mitochondrial ATP-dependent helicase irc3 (irc3) of Schizosaccharomyces pombe (strain 972 / ATCC 24843) (Fission yeast).